The primary structure comprises 217 residues: MQDTTLHIRHLGKQDYESVWHAMQHYTDTRDSESHDELWIVEHPPVFTQGQAGKSEHILNAGDIPVIQVDRGGQVTYHGPGQLVVYPLLDIKRSKVGVRQLVTHIEQSIVDMLAKYDINAYAKADAPGVYVDERKIASLGLRIRKGCSFHGLALNVDMDLAPFRRINPCGYAGLEMVQCKALGGPQTVIEAGEQLTITFSQLLGYQHLVHHQGLAAS.

A BPL/LPL catalytic domain is found at 32 to 207 (SESHDELWIV…TFSQLLGYQH (176 aa)). Residues 71–78 (RGGQVTYH), 138–140 (SLG), and 151–153 (GLA) contribute to the substrate site. The Acyl-thioester intermediate role is filled by cysteine 169.

The protein belongs to the LipB family.

The protein resides in the cytoplasm. The enzyme catalyses octanoyl-[ACP] + L-lysyl-[protein] = N(6)-octanoyl-L-lysyl-[protein] + holo-[ACP] + H(+). Its pathway is protein modification; protein lipoylation via endogenous pathway; protein N(6)-(lipoyl)lysine from octanoyl-[acyl-carrier-protein]: step 1/2. Its function is as follows. Catalyzes the transfer of endogenously produced octanoic acid from octanoyl-acyl-carrier-protein onto the lipoyl domains of lipoate-dependent enzymes. Lipoyl-ACP can also act as a substrate although octanoyl-ACP is likely to be the physiological substrate. This Shewanella baltica (strain OS155 / ATCC BAA-1091) protein is Octanoyltransferase.